Consider the following 272-residue polypeptide: Dihydropteroate synthase (272 aa).

Residues 1–256 (MIKTKIMGIL…NVLLNTRLAQ (256 aa)) enclose the Pterin-binding domain. Residue Asn-11 coordinates Mg(2+). Residues Thr-51, Asp-89, Asn-108, Asp-172, Lys-208, and 244–246 (RVH) contribute to the (7,8-dihydropterin-6-yl)methyl diphosphate site.

The protein belongs to the DHPS family. In terms of assembly, homodimer. Requires Mg(2+) as cofactor.

It carries out the reaction (7,8-dihydropterin-6-yl)methyl diphosphate + 4-aminobenzoate = 7,8-dihydropteroate + diphosphate. It functions in the pathway cofactor biosynthesis; tetrahydrofolate biosynthesis; 7,8-dihydrofolate from 2-amino-4-hydroxy-6-hydroxymethyl-7,8-dihydropteridine diphosphate and 4-aminobenzoate: step 1/2. In terms of biological role, catalyzes the condensation of para-aminobenzoate (pABA) with 6-hydroxymethyl-7,8-dihydropterin diphosphate (DHPt-PP) to form 7,8-dihydropteroate (H2Pte), the immediate precursor of folate derivatives. This chain is Dihydropteroate synthase (folP), found in Staphylococcus epidermidis (strain ATCC 12228 / FDA PCI 1200).